The chain runs to 350 residues: tRNA uridine(34) hydroxylase (350 aa).

The Rhodanese domain occupies 146-240; the sequence is DDPDAVFIDM…YARRAREQGL (95 aa). Catalysis depends on C200, which acts as the Cysteine persulfide intermediate. Basic and acidic residues predominate over residues 319–328; sequence RRRRAGRENG. The segment at 319 to 350 is disordered; sequence RRRRAGRENGNKIFNKSRGRLNSKLSIPDPAE.

The protein belongs to the TrhO family.

The catalysed reaction is uridine(34) in tRNA + AH2 + O2 = 5-hydroxyuridine(34) in tRNA + A + H2O. Functionally, catalyzes oxygen-dependent 5-hydroxyuridine (ho5U) modification at position 34 in tRNAs. The protein is tRNA uridine(34) hydroxylase of Salmonella dublin (strain CT_02021853).